Consider the following 394-residue polypeptide: Probable peptidoglycan glycosyltransferase FtsW (394 aa).

At 1 to 27 (MSALRSVAGLLQRWLLPARPAGLYDRQ) the chain is on the cytoplasmic side. The chain crosses the membrane as a helical span at residues 28 to 48 (LVVLALALMAVGLVIVASASI). The Periplasmic portion of the chain corresponds to 49–64 (PEGIAINNDPFMFVKR). Residues 65–85 (HGLFLVMALGISWFVLQVPMA) form a helical membrane-spanning segment. At 86–88 (RWQ) the chain is on the cytoplasmic side. Residues 89–109 (HYNGPMLVLAILMLVLVLLVG) traverse the membrane as a helical segment. The Periplasmic segment spans residues 110 to 123 (RSVNGSIRWLPLGP). Residues 124–144 (FNLQPAEFGKLALFVYLAGYL) form a helical membrane-spanning segment. At 145–154 (VRRQSEVRER) the chain is on the cytoplasmic side. The helical transmembrane segment at 155 to 175 (FIGFMKPMAVLFVVAILLLAQ) threads the bilayer. A topological domain (periplasmic) is located at residue P176. A helical transmembrane segment spans residues 177–197 (DLGSVVVMFVTSLGMLFLAGA). A topological domain (cytoplasmic) is located at residue R198. The helical transmembrane segment at 199–219 (LGQFIGLILVGVSAVVTLVIA) threads the bilayer. Residues 220-279 (EPYRMRRVTSFLDPWADPFGSGYQLTQSLMAFGRGSWFGEGLGNSIQKMEYLPEAHTDFV) are Periplasmic-facing. A helical transmembrane segment spans residues 280 to 300 (FAILGEELGYAGVLGALFLIF). The Cytoplasmic segment spans residues 301–322 (ALSFKALKLGHQALVAERLYEG). Residues 323 to 343 (YLAIGIGIWFSFQTFVNVGAA) form a helical membrane-spanning segment. Topologically, residues 344–354 (SGMMPTKGLTL) are periplasmic. A helical transmembrane segment spans residues 355–375 (PLVSYGGSSLIIMMVAVSMLV). Residues 376–394 (RIDFELRQASAQARVREVS) lie on the Cytoplasmic side of the membrane.

The protein belongs to the SEDS family. FtsW subfamily.

The protein resides in the cell inner membrane. The enzyme catalyses [GlcNAc-(1-&gt;4)-Mur2Ac(oyl-L-Ala-gamma-D-Glu-L-Lys-D-Ala-D-Ala)](n)-di-trans,octa-cis-undecaprenyl diphosphate + beta-D-GlcNAc-(1-&gt;4)-Mur2Ac(oyl-L-Ala-gamma-D-Glu-L-Lys-D-Ala-D-Ala)-di-trans,octa-cis-undecaprenyl diphosphate = [GlcNAc-(1-&gt;4)-Mur2Ac(oyl-L-Ala-gamma-D-Glu-L-Lys-D-Ala-D-Ala)](n+1)-di-trans,octa-cis-undecaprenyl diphosphate + di-trans,octa-cis-undecaprenyl diphosphate + H(+). Its pathway is cell wall biogenesis; peptidoglycan biosynthesis. Peptidoglycan polymerase that is essential for cell division. The sequence is that of Probable peptidoglycan glycosyltransferase FtsW from Aeromonas salmonicida (strain A449).